Here is a 355-residue protein sequence, read N- to C-terminus: MLTAIELANQFQASLVGEASTVFNGLAPLERAQSSQISFLSNPLYRKQAADSSAGALIVSKADLEFLQANPGTHSSGRVYFVAKNPYATFARVAQYFARQSAPIYEPGIHSAAVVDPSASIPASCHIGPFVRIGAGVKLGERVAILGNTFVAENCDIASDTLIYPAVSLYFGTQIGERCIIHSGAVIGADGFGFAPDFSATGGEWVKIPQTGNVVIGSDVEIGASTTIDRGAMSDTIIGSGSKIDNQVQIAHNVVVGNCCVIAGCAAISGSTKIGNFCIIGGAANFAGHLTIADRTTVSGNTSIIRSITEPGQHYTGVYPSMLHGAWEKNAAILRGLDKIRQRLRLLDKNKSTES.

Catalysis depends on His-252, which acts as the Proton acceptor.

This sequence belongs to the transferase hexapeptide repeat family. LpxD subfamily. Homotrimer.

The enzyme catalyses a UDP-3-O-[(3R)-3-hydroxyacyl]-alpha-D-glucosamine + a (3R)-hydroxyacyl-[ACP] = a UDP-2-N,3-O-bis[(3R)-3-hydroxyacyl]-alpha-D-glucosamine + holo-[ACP] + H(+). It functions in the pathway bacterial outer membrane biogenesis; LPS lipid A biosynthesis. Its function is as follows. Catalyzes the N-acylation of UDP-3-O-acylglucosamine using 3-hydroxyacyl-ACP as the acyl donor. Is involved in the biosynthesis of lipid A, a phosphorylated glycolipid that anchors the lipopolysaccharide to the outer membrane of the cell. This chain is UDP-3-O-acylglucosamine N-acyltransferase, found in Polynucleobacter asymbioticus (strain DSM 18221 / CIP 109841 / QLW-P1DMWA-1) (Polynucleobacter necessarius subsp. asymbioticus).